The sequence spans 265 residues: tRNA pseudouridine synthase A (265 aa).

Asp58 (nucleophile) is an active-site residue. Tyr116 provides a ligand contact to substrate.

Belongs to the tRNA pseudouridine synthase TruA family. In terms of assembly, homodimer.

The enzyme catalyses uridine(38/39/40) in tRNA = pseudouridine(38/39/40) in tRNA. Functionally, formation of pseudouridine at positions 38, 39 and 40 in the anticodon stem and loop of transfer RNAs. The protein is tRNA pseudouridine synthase A of Neisseria meningitidis serogroup C (strain 053442).